The chain runs to 152 residues: Large ribosomal subunit protein uL30 (152 aa).

It belongs to the universal ribosomal protein uL30 family. In terms of assembly, part of the 50S ribosomal subunit.

The protein is Large ribosomal subunit protein uL30 of Methanobrevibacter smithii (strain ATCC 35061 / DSM 861 / OCM 144 / PS).